A 184-amino-acid polypeptide reads, in one-letter code: Chromophore lyase CpcS/CpeS 1 (184 aa).

Belongs to the CpcS/CpeS biliprotein lyase family.

Functionally, covalently attaches a chromophore to Cys residue(s) of phycobiliproteins. In Synechococcus sp. (strain JA-3-3Ab) (Cyanobacteria bacterium Yellowstone A-Prime), this protein is Chromophore lyase CpcS/CpeS 1.